Here is a 499-residue protein sequence, read N- to C-terminus: Pentatricopeptide repeat-containing protein PPR5, chloroplastic (499 aa).

The span at 1–12 shows a compositional bias: low complexity; that stretch reads MLACPSTSSPWP. The segment at 1–28 is disordered; it reads MLACPSTSSPWPQRQPPSPCPGGGGGAT. Residues 1–45 constitute a chloroplast transit peptide; the sequence is MLACPSTSSPWPQRQPPSPCPGGGGGATRHVALAARSKRRGAGPA. PPR repeat units follow at residues 123 to 157, 158 to 193, 198 to 232, 233 to 267, 268 to 302, 303 to 337, 338 to 372, 373 to 407, and 408 to 442; these read DNGI…GCKP, DTSV…KCIE, TIVT…VVSP, DVYT…QCRP, DVIT…KERP, THPT…GFKP, NYVT…QTKV, HLSS…CVVP, and NGST…GIVP. A disordered region spans residues 458 to 499; it reads DRKPRTSPGINSASKPSTDSAGDSETATSDKPEVSVWHVAAT. The span at 465–484 shows a compositional bias: polar residues; it reads PGINSASKPSTDSAGDSETA.

The protein belongs to the PPR family. P subfamily.

The protein resides in the plastid. Its subcellular location is the chloroplast. Its function is as follows. Involved in the biogenesis of the plastid translation machinery by promoting the splicing of group II introns in chloroplasts. Stabilizes the chloroplast trnG pre-RNA by directly binding to a group II intron, where it protects an endonuclease-sensitive site and stimulates splicing. Binds specific sites within group II intron trnG pre-RNA. Binds with high affinity to the 5'-UTR of the chloroplastic petA mRNA. The chain is Pentatricopeptide repeat-containing protein PPR5, chloroplastic from Zea mays (Maize).